A 146-amino-acid chain; its full sequence is Hemoglobin subunit beta (146 aa).

Valine 1 carries the post-translational modification N-acetylvaline. A Globin domain is found at 2–146; that stretch reads HLTGEEKAAV…VANALAHKYH (145 aa). Threonine 12 is modified (phosphothreonine). At serine 44 the chain carries Phosphoserine. N6-acetyllysine is present on lysine 59. Histidine 63 is a binding site for heme b. Position 82 is an N6-acetyllysine (lysine 82). Histidine 92 serves as a coordination point for heme b. Position 93 is an S-nitrosocysteine (cysteine 93). Lysine 144 is modified (N6-acetyllysine).

This sequence belongs to the globin family. In terms of assembly, heterotetramer of two alpha chains and two beta chains. In terms of tissue distribution, red blood cells.

Involved in oxygen transport from the lung to the various peripheral tissues. The protein is Hemoglobin subunit beta (HBB) of Mustela putorius furo (European domestic ferret).